The primary structure comprises 302 residues: Heme A synthase (302 aa).

Over M1–K8 the chain is Cytoplasmic. A helical transmembrane segment spans residues W9–T29. The Extracellular portion of the chain corresponds to K30 to S67. A disulfide bridge connects residues C37 and C44. Residue E60 is part of the active site. H63 is a heme o binding site. The chain crosses the membrane as a helical span at residues A68 to I88. The Cytoplasmic portion of the chain corresponds to K89–P93. Residues L94–I114 traverse the membrane as a helical segment. The Extracellular segment spans residues W115–H125. Position 125 (H125) interacts with heme o. A helical transmembrane segment spans residues F126–I146. The Cytoplasmic segment spans residues D147–L161. The helical transmembrane segment at R162–V182 threads the bilayer. The Extracellular segment spans residues R183–R215. H214 contacts heme b. Residues G216 to Y236 form a helical membrane-spanning segment. Residues S237–Y244 are Cytoplasmic-facing. A helical membrane pass occupies residues G245–I265. At T266–L270 the chain is on the extracellular side. The helical transmembrane segment at I271–I291 threads the bilayer. H276 is a heme b binding site. The Cytoplasmic portion of the chain corresponds to L292–K302.

It belongs to the COX15/CtaA family. Type 1 subfamily. Interacts with CtaB. Heme b serves as cofactor.

It is found in the cell membrane. The enzyme catalyses Fe(II)-heme o + 2 A + H2O = Fe(II)-heme a + 2 AH2. It participates in porphyrin-containing compound metabolism; heme A biosynthesis; heme A from heme O: step 1/1. In terms of biological role, catalyzes the conversion of heme O to heme A by two successive hydroxylations of the methyl group at C8. The first hydroxylation forms heme I, the second hydroxylation results in an unstable dihydroxymethyl group, which spontaneously dehydrates, resulting in the formyl group of heme A. The protein is Heme A synthase of Staphylococcus epidermidis (strain ATCC 12228 / FDA PCI 1200).